A 455-amino-acid chain; its full sequence is Probable glycine dehydrogenase (decarboxylating) subunit 1 (455 aa).

This sequence belongs to the GcvP family. N-terminal subunit subfamily. In terms of assembly, the glycine cleavage system is composed of four proteins: P, T, L and H. In this organism, the P 'protein' is a heterodimer of two subunits.

It carries out the reaction N(6)-[(R)-lipoyl]-L-lysyl-[glycine-cleavage complex H protein] + glycine + H(+) = N(6)-[(R)-S(8)-aminomethyldihydrolipoyl]-L-lysyl-[glycine-cleavage complex H protein] + CO2. The glycine cleavage system catalyzes the degradation of glycine. The P protein binds the alpha-amino group of glycine through its pyridoxal phosphate cofactor; CO(2) is released and the remaining methylamine moiety is then transferred to the lipoamide cofactor of the H protein. The chain is Probable glycine dehydrogenase (decarboxylating) subunit 1 from Saccharolobus islandicus (strain Y.N.15.51 / Yellowstone #2) (Sulfolobus islandicus).